The following is a 408-amino-acid chain: MNTTDSGVNCLCAICGDRATGKHYGASSCDGCKGFFRRSIRKSHVYSCRFSRQCVVDKDKRNQCRYCRLRKCFRAGMKKEAVQNERDRISTRRSTYEGSNIPSINTLAQAEVRSCQISVPSPSSSTDINIKKIASISDVCESMKQQLLVLVEWAKYIPAFCELPLDDQVALLRAHAGEHLLLGATKRSMMYKDILLLGNHYVIHRNSCEVEVSRVANRVLDELVRPFQEIQIDDNEYACLKAIVFFDPDAKGLSDPVKIKNMRFQVQISLEDYINDRQYDSRGRFGELLLLLPTLQSITWQMIEQIQFVKLFGMVKIDNLLQEMLLGGAANDGSHLHHPMHPHLSQDPLTGQTILLGPMSTLVHTDQIATPETPLPSPPQGSGQEPYKITANQASVISHQSLSKQKQL.

The segment at residues Asn-9–Asn-84 is a DNA-binding region (nuclear receptor). 2 NR C4-type zinc fingers span residues Cys-12 to Cys-32 and Cys-48 to Cys-72. Residue Ser-94 is modified to Phosphoserine. The NR LBD domain occupies Ser-99–Gly-328. The disordered stretch occupies residues Ala-369–Leu-408. Residues Thr-370 and Thr-373 each carry the phosphothreonine modification. The residue at position 377 (Ser-377) is a Phosphoserine. Over residues Thr-390–Leu-408 the composition is skewed to polar residues.

It belongs to the nuclear hormone receptor family. NR2 subfamily.

It is found in the nucleus. Its function is as follows. Transcription factor. Has a lower transcription activation potential than HNF4-alpha. This Mus musculus (Mouse) protein is Hepatocyte nuclear factor 4-gamma (Hnf4g).